The primary structure comprises 371 residues: Putative glutamate--cysteine ligase 2 (371 aa).

Belongs to the glutamate--cysteine ligase type 2 family. YbdK subfamily. Homodimer.

It carries out the reaction L-cysteine + L-glutamate + ATP = gamma-L-glutamyl-L-cysteine + ADP + phosphate + H(+). ATP-dependent carboxylate-amine ligase which exhibits weak glutamate--cysteine ligase activity. This chain is Putative glutamate--cysteine ligase 2, found in Cronobacter sakazakii (strain ATCC BAA-894) (Enterobacter sakazakii).